The chain runs to 504 residues: Biotinidase (504 aa).

Residues 1–20 (MFSFGTVFTFALLLIPLTEA) form the signal peptide. Residues 30-309 (YEHNLILNPD…GRLLVARVPV (280 aa)) enclose the CN hydrolase domain. Glu-79 functions as the Proton acceptor in the catalytic mechanism. 2 N-linked (GlcNAc...) asparagine glycosylation sites follow: Asn-86 and Asn-117. The Proton donor role is filled by Lys-181. Cys-214 acts as the Nucleophile in catalysis. N-linked (GlcNAc...) asparagine glycosylation is found at Asn-261, Asn-365, and Asn-375.

Belongs to the carbon-nitrogen hydrolase superfamily. BTD/VNN family.

Its subcellular location is the secreted. The protein localises to the extracellular space. The enzyme catalyses biocytin + H2O = biotin + L-lysine. It catalyses the reaction biotin amide + H2O = biotin + NH4(+). In terms of biological role, catalytic release of biotin from biocytin, the product of biotin-dependent carboxylases degradation. In Takifugu rubripes (Japanese pufferfish), this protein is Biotinidase (btd).